A 398-amino-acid polypeptide reads, in one-letter code: Thyrotropin-releasing hormone receptor (398 aa).

Residues 1–28 (MENETVSELNQTQLQPRAVVALEYQVVT) are Extracellular-facing. N-linked (GlcNAc...) asparagine glycosylation is found at asparagine 3 and asparagine 10. A helical membrane pass occupies residues 29 to 51 (ILLVLIICGLGIVGNIMVVLVVM). Residues 52-61 (RTKHMRTPTN) are Cytoplasmic-facing. Residues 62–83 (CYLVSLAVADLMVLVAAGLPNI) form a helical membrane-spanning segment. Over 84-99 (TDSIYGSWVYGYVGCL) the chain is Extracellular. An intrachain disulfide couples cysteine 98 to cysteine 179. A helical transmembrane segment spans residues 100–121 (CITYLQYLGINASSCSITAFTI). The Cytoplasmic portion of the chain corresponds to 122–144 (ERYIAICHPIKAQFLCTFSRAKK). A helical transmembrane segment spans residues 145 to 168 (IIIFVWAFTSLYCMLWFFLLDLNI). The Extracellular portion of the chain corresponds to 169 to 193 (STYKDAIVISCGYKISRNYYSPIYL). A helical transmembrane segment spans residues 194-215 (MDFGVFYVVPMILATVLYGFIA). The Cytoplasmic portion of the chain corresponds to 216-266 (RILFLNPIPSDPKENSKTWKNDSTHQNTNLNVNTSNRCFNSTVSSRKQVTK). The chain crosses the membrane as a helical span at residues 267-288 (MLAVVVILFALLWMPYRTLVVV). Residues 289–296 (NSFLSSPF) lie on the Extracellular side of the membrane. The chain crosses the membrane as a helical span at residues 297–319 (QENWFLLFCRICIYLNSAINPVI). At 320–398 (YNLMSQKFRA…LASEVSFSQS (79 aa)) the chain is on the cytoplasmic side.

Belongs to the G-protein coupled receptor 1 family.

The protein resides in the cell membrane. Its function is as follows. Receptor for thyrotropin-releasing hormone (TRH). Upon ligand binding, this G-protein-coupled receptor triggers activation of the phosphatidylinositol (IP3)-calcium-protein kinase C (PKC) pathway. The chain is Thyrotropin-releasing hormone receptor (TRHR) from Homo sapiens (Human).